The sequence spans 315 residues: Probable cell division protein WhiA (315 aa).

Positions 280 to 313 (SLKELGEMLDPPVGKSGINHRLRKIEKIAEELRT) form a DNA-binding region, H-T-H motif.

The protein belongs to the WhiA family.

In terms of biological role, involved in cell division and chromosome segregation. In Clostridium beijerinckii (strain ATCC 51743 / NCIMB 8052) (Clostridium acetobutylicum), this protein is Probable cell division protein WhiA.